The primary structure comprises 187 residues: Peptidyl-tRNA hydrolase (187 aa).

A tRNA-binding site is contributed by Y15. H20 serves as the catalytic Proton acceptor. F65, N67, and N113 together coordinate tRNA.

Belongs to the PTH family. Monomer.

It localises to the cytoplasm. It catalyses the reaction an N-acyl-L-alpha-aminoacyl-tRNA + H2O = an N-acyl-L-amino acid + a tRNA + H(+). Its function is as follows. Hydrolyzes ribosome-free peptidyl-tRNAs (with 1 or more amino acids incorporated), which drop off the ribosome during protein synthesis, or as a result of ribosome stalling. In terms of biological role, catalyzes the release of premature peptidyl moieties from peptidyl-tRNA molecules trapped in stalled 50S ribosomal subunits, and thus maintains levels of free tRNAs and 50S ribosomes. The protein is Peptidyl-tRNA hydrolase of Methylococcus capsulatus (strain ATCC 33009 / NCIMB 11132 / Bath).